Consider the following 268-residue polypeptide: Undecaprenyl-diphosphatase (268 aa).

The next 8 helical transmembrane spans lie at Val3–Pro23, Phe46–Leu66, Phe84–Ile104, Val107–Leu127, Tyr144–Val164, Ala184–Leu204, Leu218–Leu238, and Leu248–Gly268.

The protein belongs to the UppP family.

The protein localises to the cell inner membrane. The enzyme catalyses di-trans,octa-cis-undecaprenyl diphosphate + H2O = di-trans,octa-cis-undecaprenyl phosphate + phosphate + H(+). In terms of biological role, catalyzes the dephosphorylation of undecaprenyl diphosphate (UPP). Confers resistance to bacitracin. The chain is Undecaprenyl-diphosphatase from Brucella anthropi (strain ATCC 49188 / DSM 6882 / CCUG 24695 / JCM 21032 / LMG 3331 / NBRC 15819 / NCTC 12168 / Alc 37) (Ochrobactrum anthropi).